The sequence spans 1637 residues: Stress response protein NST1 (1637 aa).

Over residues 1 to 17 (MSNRGNLNLNLPPSSGK) the composition is skewed to polar residues. Disordered regions lie at residues 1 to 155 (MSNR…EITN), 221 to 252 (HQAS…HASH), 442 to 494 (LKMN…SQQL), 504 to 523 (KNNL…PLQH), 681 to 734 (KTPY…EIDD), 746 to 825 (QHHH…EEEK), 871 to 1036 (AKRE…SKHV), 1049 to 1075 (SKQN…EENP), 1176 to 1299 (NSSQ…GAII), and 1512 to 1534 (YTQQ…QYPL). The span at 24 to 33 (VHFELSKEKN) shows a compositional bias: basic and acidic residues. Low complexity-rich tracts occupy residues 34–53 (NSTN…SNNT) and 64–113 (NDNN…QQQS). Residues 124-134 (AKKRKKKKSKK) are compositionally biased toward basic residues. Positions 135–155 (SSNNNGNNSNTNSNSNSEITN) are enriched in low complexity. Positions 446 to 470 (QRQQSQSQSQSQSQQQRDVQTAQSQ) are enriched in low complexity. A compositionally biased stretch (polar residues) spans 471 to 487 (VLSKDSSLKNANTSMNK). Over residues 692–706 (PAATSQDREQQVQPN) the composition is skewed to polar residues. Positions 717–734 (DHEHEHEHEHEHEHEIDD) are enriched in basic and acidic residues. Positions 754 to 808 (EEYDEEDEEDDEEYEYGDDEEEEDEEDEEEGEDEELEEVVEDDVDEEILDDEEEF) are enriched in acidic residues. A coiled-coil region spans residues 855–1023 (KDNTRKLFEE…KQLEKEAAVS (169 aa)). Composition is skewed to basic and acidic residues over residues 871–887 (AKRE…EKAK) and 896–1021 (AKEE…KEAA). Positions 1049–1063 (SKQNQAQNGNQSHLP) are enriched in polar residues. Over residues 1176–1199 (NSSQGSPWTTNSTLSSNLGSTGLS) the composition is skewed to low complexity. The span at 1201–1228 (GQGQTVSGVNTNLPSSIGITSGGASQIF) shows a compositional bias: polar residues. The segment covering 1234–1257 (PQLQPHQPQQQQQQQQQQQQQQQQ) has biased composition (low complexity). A compositionally biased stretch (polar residues) spans 1258 to 1267 (NYFSPFNSFS). Composition is skewed to low complexity over residues 1282–1299 (TTNI…GAII) and 1514–1534 (QQQQ…QYPL).

This sequence belongs to the NST1 family.

Its subcellular location is the cytoplasm. May act as a negative regulator of salt tolerance. The chain is Stress response protein NST1 (NST1) from Lodderomyces elongisporus (strain ATCC 11503 / CBS 2605 / JCM 1781 / NBRC 1676 / NRRL YB-4239) (Yeast).